Here is a 250-residue protein sequence, read N- to C-terminus: Purine nucleoside phosphorylase BQ2027_MB2173C (250 aa).

H77, C114, and H131 together coordinate Zn(2+).

It belongs to the purine nucleoside phosphorylase YfiH/LACC1 family. In terms of assembly, homodimer. Cu(2+) is required as a cofactor. It depends on Zn(2+) as a cofactor.

It catalyses the reaction adenosine + phosphate = alpha-D-ribose 1-phosphate + adenine. The enzyme catalyses S-methyl-5'-thioadenosine + phosphate = 5-(methylsulfanyl)-alpha-D-ribose 1-phosphate + adenine. It carries out the reaction inosine + phosphate = alpha-D-ribose 1-phosphate + hypoxanthine. The catalysed reaction is adenosine + H2O + H(+) = inosine + NH4(+). Purine nucleoside enzyme that catalyzes the phosphorolysis of adenosine and inosine nucleosides, yielding D-ribose 1-phosphate and the respective free bases, adenine and hypoxanthine. Also catalyzes the phosphorolysis of S-methyl-5'-thioadenosine into adenine and S-methyl-5-thio-alpha-D-ribose 1-phosphate. Also has adenosine deaminase activity. This Mycobacterium bovis (strain ATCC BAA-935 / AF2122/97) protein is Purine nucleoside phosphorylase BQ2027_MB2173C.